The following is a 131-amino-acid chain: Large ribosomal subunit protein bL17 (131 aa).

This sequence belongs to the bacterial ribosomal protein bL17 family. In terms of assembly, part of the 50S ribosomal subunit. Contacts protein L32.

This Azoarcus sp. (strain BH72) protein is Large ribosomal subunit protein bL17.